Reading from the N-terminus, the 205-residue chain is Recombination protein RecR (205 aa).

The C4-type zinc finger occupies 58–73 (CKKCHTISDHELCAIC). The Toprim domain maps to 81 to 177 (RVVCIVEDIR…KISTIARGIP (97 aa)).

The protein belongs to the RecR family.

Functionally, may play a role in DNA repair. It seems to be involved in an RecBC-independent recombinational process of DNA repair. It may act with RecF and RecO. In Cytophaga hutchinsonii (strain ATCC 33406 / DSM 1761 / CIP 103989 / NBRC 15051 / NCIMB 9469 / D465), this protein is Recombination protein RecR.